A 520-amino-acid chain; its full sequence is Glutamate--cysteine ligase (520 aa).

The protein belongs to the glutamate--cysteine ligase type 1 family. Type 1 subfamily.

It catalyses the reaction L-cysteine + L-glutamate + ATP = gamma-L-glutamyl-L-cysteine + ADP + phosphate + H(+). It participates in sulfur metabolism; glutathione biosynthesis; glutathione from L-cysteine and L-glutamate: step 1/2. This is Glutamate--cysteine ligase from Sodalis glossinidius (strain morsitans).